The sequence spans 88 residues: Translation initiation factor IF-1 2 (88 aa).

Residues 1 to 72 (MAKEELIEMQ…TKGRITFRHL (72 aa)) form the S1-like domain.

The protein belongs to the IF-1 family. In terms of assembly, component of the 30S ribosomal translation pre-initiation complex which assembles on the 30S ribosome in the order IF-2 and IF-3, IF-1 and N-formylmethionyl-tRNA(fMet); mRNA recruitment can occur at any time during PIC assembly.

It is found in the cytoplasm. Its function is as follows. One of the essential components for the initiation of protein synthesis. Stabilizes the binding of IF-2 and IF-3 on the 30S subunit to which N-formylmethionyl-tRNA(fMet) subsequently binds. Helps modulate mRNA selection, yielding the 30S pre-initiation complex (PIC). Upon addition of the 50S ribosomal subunit IF-1, IF-2 and IF-3 are released leaving the mature 70S translation initiation complex. The polypeptide is Translation initiation factor IF-1 2 (Acidovorax sp. (strain JS42)).